A 445-amino-acid polypeptide reads, in one-letter code: MSDYLSVSALTKYIKYKFDQDPHLQSVLIKGELSNFKKHSSGHLYFNVKDKESVISAMMFKGSASKLNFEPKEGDEVLLEARVSVFERRGNYQIYVNKMQLDGIGNLYQKLEALKKKLTEEGCFDKANKKSIPKFPKKIAVLTASTGAAIRDIHSTINSRFPLAEQIQISTLVQGEKAKDDIIEKIEYADSLGVDTIIVGRGGGSIEDLWNFNEEAVVRAIYNCKTPIISAVGHETDFTLSDFAADIRAATPTQAAVIATPDQYELLQQIQQYQFTLTRFIKKHLEQQRKHVEHLSSYYKFKQPTLLYDQQIQRRDDLEKRLKQQIQATFEQQRHRLMLLQQRYNLKALLSSVNQEQQNNLQLTNQLVKLLNSKILSYKNDLKNKVENLNNLSPTNTMLRGYAIVNKKDEVITSTKDLTENDQLTLTMKDGLVDAKVTKVRCNND.

The protein belongs to the XseA family. In terms of assembly, heterooligomer composed of large and small subunits.

The protein resides in the cytoplasm. It catalyses the reaction Exonucleolytic cleavage in either 5'- to 3'- or 3'- to 5'-direction to yield nucleoside 5'-phosphates.. Its function is as follows. Bidirectionally degrades single-stranded DNA into large acid-insoluble oligonucleotides, which are then degraded further into small acid-soluble oligonucleotides. This chain is Exodeoxyribonuclease 7 large subunit, found in Staphylococcus aureus (strain USA300 / TCH1516).